Here is a 625-residue protein sequence, read N- to C-terminus: DNA mismatch repair protein MutL (625 aa).

The protein belongs to the DNA mismatch repair MutL/HexB family.

In terms of biological role, this protein is involved in the repair of mismatches in DNA. It is required for dam-dependent methyl-directed DNA mismatch repair. May act as a 'molecular matchmaker', a protein that promotes the formation of a stable complex between two or more DNA-binding proteins in an ATP-dependent manner without itself being part of a final effector complex. The protein is DNA mismatch repair protein MutL of Xanthomonas axonopodis pv. citri (strain 306).